The primary structure comprises 166 residues: Peptidyl-prolyl cis-trans isomerase cyp18 (166 aa).

One can recognise a PPIase cyclophilin-type domain in the interval serine 2 to isoleucine 164.

It belongs to the cyclophilin-type PPIase family. In terms of assembly, monomer.

The protein resides in the cytoplasm. It catalyses the reaction [protein]-peptidylproline (omega=180) = [protein]-peptidylproline (omega=0). Inhibition by cyclosporin A with a Ki of 21 mu-mol. Functionally, PPIases accelerate the folding of proteins. It catalyzes the cis-trans isomerization of proline imidic peptide bonds in oligopeptides. This Streptomyces antibioticus protein is Peptidyl-prolyl cis-trans isomerase cyp18.